The primary structure comprises 217 residues: Adenylate kinase (217 aa).

10-15 serves as a coordination point for ATP; it reads GAGKGT. Residues 30–59 are NMP; it reads STGDMLRAAIREGTELGLKAKSVMESGGLV. AMP-binding positions include T31, R36, 57–59, 85–88, and Q92; these read GLV and GFPR. The LID stretch occupies residues 122 to 159; that stretch reads GRRQHPASGRVYHVVYNPPKVEGKDDETGEDLVQRPDD. Residues R123 and 132-133 each bind ATP; that span reads VY. Residues R156 and R167 each contribute to the AMP site. R202 provides a ligand contact to ATP.

It belongs to the adenylate kinase family. Monomer.

The protein localises to the cytoplasm. The enzyme catalyses AMP + ATP = 2 ADP. Its pathway is purine metabolism; AMP biosynthesis via salvage pathway; AMP from ADP: step 1/1. Functionally, catalyzes the reversible transfer of the terminal phosphate group between ATP and AMP. Plays an important role in cellular energy homeostasis and in adenine nucleotide metabolism. In Acinetobacter baumannii (strain AB307-0294), this protein is Adenylate kinase.